The following is a 581-amino-acid chain: NADH-quinone oxidoreductase subunit C/D (581 aa).

The segment at methionine 1–phenylalanine 172 is NADH dehydrogenase I subunit C. Residues glutamate 196 to arginine 581 form an NADH dehydrogenase I subunit D region.

It in the N-terminal section; belongs to the complex I 30 kDa subunit family. This sequence in the C-terminal section; belongs to the complex I 49 kDa subunit family. As to quaternary structure, NDH-1 is composed of 13 different subunits. Subunits NuoB, CD, E, F, and G constitute the peripheral sector of the complex.

The protein resides in the cell inner membrane. It carries out the reaction a quinone + NADH + 5 H(+)(in) = a quinol + NAD(+) + 4 H(+)(out). Functionally, NDH-1 shuttles electrons from NADH, via FMN and iron-sulfur (Fe-S) centers, to quinones in the respiratory chain. The immediate electron acceptor for the enzyme in this species is believed to be ubiquinone. Couples the redox reaction to proton translocation (for every two electrons transferred, four hydrogen ions are translocated across the cytoplasmic membrane), and thus conserves the redox energy in a proton gradient. This chain is NADH-quinone oxidoreductase subunit C/D, found in Rhodopseudomonas palustris (strain ATCC BAA-98 / CGA009).